The sequence spans 903 residues: Protein translocase subunit SecA (903 aa).

ATP-binding positions include Gln-87, 105–109 (GEGKT), and Asp-513. Basic and acidic residues predominate over residues 840–853 (MEAQRRAQAEEAAR). Residues 840–903 (MEAQRRAQAE…KYKQCHGQIN (64 aa)) are disordered. Cys-887, Cys-889, Cys-898, and His-899 together coordinate Zn(2+).

This sequence belongs to the SecA family. In terms of assembly, monomer and homodimer. Part of the essential Sec protein translocation apparatus which comprises SecA, SecYEG and auxiliary proteins SecDF-YajC and YidC. The cofactor is Zn(2+).

It localises to the cell inner membrane. It is found in the cytoplasm. It carries out the reaction ATP + H2O + cellular proteinSide 1 = ADP + phosphate + cellular proteinSide 2.. In terms of biological role, part of the Sec protein translocase complex. Interacts with the SecYEG preprotein conducting channel. Has a central role in coupling the hydrolysis of ATP to the transfer of proteins into and across the cell membrane, serving both as a receptor for the preprotein-SecB complex and as an ATP-driven molecular motor driving the stepwise translocation of polypeptide chains across the membrane. The sequence is that of Protein translocase subunit SecA from Vibrio cholerae serotype O1 (strain M66-2).